Here is a 203-residue protein sequence, read N- to C-terminus: ATP-dependent Clp protease proteolytic subunit (203 aa).

Ser100 (nucleophile) is an active-site residue. His125 is a catalytic residue.

Belongs to the peptidase S14 family. Component of the chloroplastic Clp protease core complex.

It is found in the plastid. The protein resides in the chloroplast stroma. It catalyses the reaction Hydrolysis of proteins to small peptides in the presence of ATP and magnesium. alpha-casein is the usual test substrate. In the absence of ATP, only oligopeptides shorter than five residues are hydrolyzed (such as succinyl-Leu-Tyr-|-NHMec, and Leu-Tyr-Leu-|-Tyr-Trp, in which cleavage of the -Tyr-|-Leu- and -Tyr-|-Trp bonds also occurs).. Cleaves peptides in various proteins in a process that requires ATP hydrolysis. Has a chymotrypsin-like activity. Plays a major role in the degradation of misfolded proteins. The chain is ATP-dependent Clp protease proteolytic subunit from Dioscorea elephantipes (Elephant's foot yam).